A 92-amino-acid chain; its full sequence is Small ribosomal subunit protein uS19 (92 aa).

Belongs to the universal ribosomal protein uS19 family.

In terms of biological role, protein S19 forms a complex with S13 that binds strongly to the 16S ribosomal RNA. This is Small ribosomal subunit protein uS19 from Rhizobium rhizogenes (strain K84 / ATCC BAA-868) (Agrobacterium radiobacter).